The primary structure comprises 901 residues: Schlafen family member 11 (901 aa).

Mg(2+) contacts are provided by Glu209 and Glu214. Lys216 is an active-site residue. The Zn(2+) site is built by His285, Cys287, Cys321, and Cys322. 599 to 606 (GLPGSGKT) contacts ATP.

This sequence belongs to the Schlafen family. Subgroup III subfamily. In terms of assembly, homodimer. Interacts with MCM3. Interacts with DHX9. Interacts with RPA1. Mg(2+) serves as cofactor. In terms of tissue distribution, exhibits a wider expression range in ovarian and colon adenocarcinoma than in their corresponding healthy tissues.

The protein resides in the nucleus. It is found in the chromosome. Its function is as follows. Inhibitor of DNA replication that promotes cell death in response to DNA damage. Acts as a guardian of the genome by killing cells with defective replication. Persistently blocks stressed replication forks by opening chromatin across replication initiation sites at stressed replication forks, possibly leading to unwind DNA ahead of the MCM helicase and block fork progression, ultimately leading to cell death. Upon DNA damage, inhibits translation of ATR or ATM based on distinct codon usage without disrupting early DNA damage response signaling. Antiviral restriction factor with manganese-dependent type II tRNA endoribonuclease. A single tRNA molecule is bound and cleaved by the SLFN11 dimer. Specifically abrogates the production of retroviruses such as human immunodeficiency virus 1 (HIV-1) by acting as a specific inhibitor of the synthesis of retroviruses encoded proteins in a codon-usage-dependent manner. Impairs the replication of human cytomegalovirus (HCMV) and some Flaviviruses. Exploits the unique viral codon bias towards A/T nucleotides. Also acts as an interferon (IFN)-induced antiviral protein which acts as an inhibitor of retrovirus protein synthesis. The protein is Schlafen family member 11 of Homo sapiens (Human).